We begin with the raw amino-acid sequence, 431 residues long: Tyrosine--tRNA ligase (431 aa).

Tyrosine 34 lines the L-tyrosine pocket. The 'HIGH' region motif lies at proline 39–histidine 48. The L-tyrosine site is built by tyrosine 171 and glutamine 175. The 'KMSKS' region signature appears at lysine 231 to threonine 235. Position 234 (lysine 234) interacts with ATP. In terms of domain architecture, S4 RNA-binding spans isoleucine 353–lysine 422.

This sequence belongs to the class-I aminoacyl-tRNA synthetase family. TyrS type 1 subfamily. Homodimer.

Its subcellular location is the cytoplasm. The enzyme catalyses tRNA(Tyr) + L-tyrosine + ATP = L-tyrosyl-tRNA(Tyr) + AMP + diphosphate + H(+). Its function is as follows. Catalyzes the attachment of tyrosine to tRNA(Tyr) in a two-step reaction: tyrosine is first activated by ATP to form Tyr-AMP and then transferred to the acceptor end of tRNA(Tyr). The sequence is that of Tyrosine--tRNA ligase from Neisseria meningitidis serogroup A / serotype 4A (strain DSM 15465 / Z2491).